Reading from the N-terminus, the 106-residue chain is 10 kDa heat shock protein, mitochondrial (106 aa).

Ser2 carries the N-acetylserine modification. Ser31 is modified (phosphoserine).

It belongs to the GroES chaperonin family. As to quaternary structure, homohexamer. Post-translationally, the N-terminus is blocked.

The protein localises to the mitochondrion matrix. Functionally, eukaryotic CPN10 homolog which is essential for mitochondrial protein biogenesis, together with CPN60. Binds to CPN60 in the presence of Mg-ATP and suppresses the ATPase activity of the latter. This Saccharomyces cerevisiae (strain ATCC 204508 / S288c) (Baker's yeast) protein is 10 kDa heat shock protein, mitochondrial (HSP10).